Consider the following 986-residue polypeptide: MAGIFYFILFSFLFGICDAVTGSRVYPANEVTLLDSRSVQGELGWIASPLEGGWEEVSIMDEKNTPIRTYQVCNVMEASQNNWLRTDWITREGAQRVYIEIKFTLRDCNSLPGVMGTCKETFNLYYYESDNDKERFIRESQFGKIDTIAADESFTQVDIGDRIMKLNTEIRDVGPLSKKGFYLAFQDVGACIALVSVRVFYKKCPLTVRNLAQFPDTITGADTSSLVEVRGSCVNNSEEKDVPKMYCGADGEWLVPIGNCLCNAGHEEQNGECQACKIGYYKALSTDASCAKCPPHSYSVWEGATSCTCDRGFFRADNDAASMPCTRPPSAPLNLISNVNETSVNLEWSSPQNTGGRQDISYNVVCKKCGAGDPSKCRPCGSGVHYTPQQNGLKTTRVSITDLLAHTNYTFEIWAVNGVSKYNPSPDQSVSVTVTTNQAAPSSIALVQAKEVTRYSVALAWLEPDRPNGVILEYEVKYYEKDQNERSYRIVRTAARNTDIKGLNPLTSYVFHVRARTAAGYGDFSEPLEVTTNTVPSRIIGDGANSTVLLVSVSGSVVLVVILIAAFVISRRRSKYSKAKQEADEEKHLNQGVRTYVDPFTYEDPNQAVREFAKEIDASCIKIEKVIGVGEFGEVCSGRLKVPGKREICVAIKTLKAGYTDKQRRDFLSEASIMGQFDHPNIIHLEGVVTKCKPVMIITEYMENGSLDAFLRKNDGRFTVIQLVGMLRGIGSGMKYLSDMSYVHRDLAARNILVNSNLVCKVSDFGMSRVLEDDPEAAYTTRGGKIPIRWTAPEAIAYRKFTSASDVWSYGIVMWEVMSYGERPYWDMSNQDVIKAIEEGYRLPPPMDCPIALHQLMLDCWQKERSDRPKFGQIVNMLDKLIRNPNSLKRTGSESSRPNTALLDPSSPEFSAVVSVGDWLQAIKMDRYKDNFTAAGYTTLEAVVHMSQDDLARIGITAITHQNKILSSVQAMRTQMQQMHGRMVPV.

The first 19 residues, 1–19 (MAGIFYFILFSFLFGICDA), serve as a signal peptide directing secretion. Over 20-547 (VTGSRVYPAN…RIIGDGANST (528 aa)) the chain is Extracellular. One can recognise an Eph LBD domain in the interval 30–209 (EVTLLDSRSV…FYKKCPLTVR (180 aa)). N-linked (GlcNAc...) asparagine glycans are attached at residues asparagine 235, asparagine 340, and asparagine 408. Fibronectin type-III domains follow at residues 328-439 (PPSA…TNQA) and 440-537 (APSS…TVPS). The helical transmembrane segment at 548 to 569 (VLLVSVSGSVVLVVILIAAFVI) threads the bilayer. The Cytoplasmic segment spans residues 570–986 (SRRRSKYSKA…QQMHGRMVPV (417 aa)). Phosphotyrosine; by autocatalysis occurs at positions 596 and 602. The Protein kinase domain occupies 621–882 (IKIEKVIGVG…QIVNMLDKLI (262 aa)). Residues 627 to 635 (IGVGEFGEV) and lysine 653 each bind ATP. Aspartate 746 serves as the catalytic Proton acceptor. Phosphotyrosine; by autocatalysis occurs at positions 779 and 928. The region spanning 911 to 975 (SAVVSVGDWL…LSSVQAMRTQ (65 aa)) is the SAM domain. A PDZ-binding motif is present at residues 984–986 (VPV).

Belongs to the protein kinase superfamily. Tyr protein kinase family. Ephrin receptor subfamily. As to quaternary structure, heterotetramer upon binding of the ligand. The heterotetramer is composed of an ephrin dimer and a receptor dimer. Oligomerization is probably required to induce biological responses. Interacts (phosphorylated at position Tyr-602) with FYN. Interacts (via PDZ motif) with SIPA1L1 (via PDZ domain); controls neuronal morphology through regulation of the RAP1 (RAP1A or RAP1B) and RAP2 (RAP2A, RAP2B or RAP2C) GTPases. Interacts with CDK5, CDK5R1 and NGEF; upon activation by EFNA1 induces NGEF phosphorylation by the kinase CDK5. Interacts with CHN1; effector of EPHA4 in axon guidance linking EPHA4 activation to RAC1 regulation. Forms a ternary complex composed of ADAM10, CADH1 and EPHA4; within the complex, CADH1 is cleaved by ADAM10 which disrupts adherens junctions. In terms of tissue distribution, expressed in inner and outer pillar cells of the organ of Corti (at protein level). Highest expression in the adult brain and retina and also detectable in kidney, lung, skeletal muscle and thymus. Not detected in heart and liver. Expressed in myogenic progenitor cells.

The protein resides in the cell membrane. It is found in the cell projection. The protein localises to the axon. Its subcellular location is the dendrite. It localises to the postsynaptic density membrane. The protein resides in the early endosome. It is found in the cell junction. The protein localises to the adherens junction. The catalysed reaction is L-tyrosyl-[protein] + ATP = O-phospho-L-tyrosyl-[protein] + ADP + H(+). In terms of biological role, receptor tyrosine kinase which binds membrane-bound ephrin family ligands residing on adjacent cells, leading to contact-dependent bidirectional signaling into neighboring cells. The signaling pathway downstream of the receptor is referred to as forward signaling while the signaling pathway downstream of the ephrin ligand is referred to as reverse signaling. Highly promiscuous, it has the unique property among Eph receptors to bind and to be physiologically activated by both GPI-anchored ephrin-A and transmembrane ephrin-B ligands including EFNA1 and EFNB3. Upon activation by ephrin ligands, modulates cell morphology and integrin-dependent cell adhesion through regulation of the Rac, Rap and Rho GTPases activity. Plays an important role in the development of the nervous system controlling different steps of axonal guidance including the establishment of the corticospinal projections. May also control the segregation of motor and sensory axons during neuromuscular circuit developmen. In addition to its role in axonal guidance plays a role in synaptic plasticity. Activated by EFNA1 phosphorylates CDK5 at 'Tyr-15' which in turn phosphorylates NGEF regulating RHOA and dendritic spine morphogenesis. In the nervous system, also plays a role in repair after injury preventing axonal regeneration and in angiogenesis playing a role in central nervous system vascular formation. Additionally, its promiscuity makes it available to participate in a variety of cell-cell signaling regulating for instance the development of the thymic epithelium. During development of the cochlear organ of Corti, regulates pillar cell separation by forming a ternary complex with ADAM10 and CADH1 which facilitates the cleavage of CADH1 by ADAM10 and disruption of adherens junctions. Phosphorylates CAPRIN1, promoting CAPRIN1-dependent formation of a membraneless compartment. The polypeptide is Ephrin type-A receptor 4 (Epha4) (Mus musculus (Mouse)).